A 147-amino-acid chain; its full sequence is Formiminotransferase N-terminal subdomain-containing protein (147 aa).

An N-terminal signal peptide occupies residues 1–20; the sequence is MSSSRVGLRLAACLLNVSEA.

Belongs to the formiminotransferase family. In terms of tissue distribution, widely expressed with highest levels in liver and skeletal muscle, and moderate levels in kidney, bone and pancreas.

The chain is Formiminotransferase N-terminal subdomain-containing protein (FTCDNL1) from Homo sapiens (Human).